We begin with the raw amino-acid sequence, 297 residues long: 2,3,4,5-tetrahydropyridine-2,6-dicarboxylate N-succinyltransferase (297 aa).

Mg(2+) is bound by residues Asp148 and Glu165. Residue Glu181 is the Acyl-anhydride intermediate of the active site. Succinyl-CoA contacts are provided by residues Arg183, Gly198, Ser201, Ala224, 239–240, Gly247, Lys258, and 271–274; these read EA and RRDS.

The protein belongs to the type 2 tetrahydrodipicolinate N-succinyltransferase family. In terms of assembly, homotrimer.

Its subcellular location is the cytoplasm. The enzyme catalyses (S)-2,3,4,5-tetrahydrodipicolinate + succinyl-CoA + H2O = (S)-2-succinylamino-6-oxoheptanedioate + CoA. Its pathway is amino-acid biosynthesis; L-lysine biosynthesis via DAP pathway; LL-2,6-diaminopimelate from (S)-tetrahydrodipicolinate (succinylase route): step 1/3. Catalyzes the conversion of the cyclic tetrahydrodipicolinate (THDP) into the acyclic N-succinyl-L-2-amino-6-oxopimelate using succinyl-CoA. The sequence is that of 2,3,4,5-tetrahydropyridine-2,6-dicarboxylate N-succinyltransferase from Corynebacterium glutamicum (strain ATCC 13032 / DSM 20300 / JCM 1318 / BCRC 11384 / CCUG 27702 / LMG 3730 / NBRC 12168 / NCIMB 10025 / NRRL B-2784 / 534).